A 277-amino-acid chain; its full sequence is Proteasome subunit beta type-7 (277 aa).

A propeptide spans 1 to 43 (MAAVSVYAPPVGGFSFDNCRRNAVLEADFAKRGYKLPKVRKTG) (removed in mature form). The active-site Nucleophile is T44.

Belongs to the peptidase T1B family. As to quaternary structure, the 26S proteasome consists of a 20S proteasome core and two 19S regulatory subunits. The 20S proteasome core is a barrel-shaped complex made of 28 subunits that are arranged in four stacked rings. The two outer rings are each formed by seven alpha subunits, and the two inner rings are formed by seven beta subunits. The proteolytic activity is exerted by three beta-subunits PSMB5, PSMB6 and PSMB7. (Microbial infection) Interacts with HIV-1 Tat protein. In terms of tissue distribution, expressed at a low level in colonic mucosa. Up-regulated in colorectal cancer tissues.

It localises to the cytoplasm. The protein resides in the nucleus. The enzyme catalyses Cleavage of peptide bonds with very broad specificity.. Component of the 20S core proteasome complex involved in the proteolytic degradation of most intracellular proteins. This complex plays numerous essential roles within the cell by associating with different regulatory particles. Associated with two 19S regulatory particles, forms the 26S proteasome and thus participates in the ATP-dependent degradation of ubiquitinated proteins. The 26S proteasome plays a key role in the maintenance of protein homeostasis by removing misfolded or damaged proteins that could impair cellular functions, and by removing proteins whose functions are no longer required. Associated with the PA200 or PA28, the 20S proteasome mediates ubiquitin-independent protein degradation. This type of proteolysis is required in several pathways including spermatogenesis (20S-PA200 complex) or generation of a subset of MHC class I-presented antigenic peptides (20S-PA28 complex). Within the 20S core complex, PSMB7 displays a trypsin-like activity. This is Proteasome subunit beta type-7 from Homo sapiens (Human).